Consider the following 423-residue polypeptide: Histidinol dehydrogenase (423 aa).

Residues Tyr116, Gln177, and Asn200 each coordinate NAD(+). Substrate-binding residues include Ser223, Gln245, and His248. Gln245 and His248 together coordinate Zn(2+). Residues Glu313 and His314 each act as proton acceptor in the active site. Residues His314, Asp347, Glu401, and His406 each contribute to the substrate site. Residue Asp347 participates in Zn(2+) binding. His406 provides a ligand contact to Zn(2+).

It belongs to the histidinol dehydrogenase family. Zn(2+) serves as cofactor.

It carries out the reaction L-histidinol + 2 NAD(+) + H2O = L-histidine + 2 NADH + 3 H(+). Its pathway is amino-acid biosynthesis; L-histidine biosynthesis; L-histidine from 5-phospho-alpha-D-ribose 1-diphosphate: step 9/9. Functionally, catalyzes the sequential NAD-dependent oxidations of L-histidinol to L-histidinaldehyde and then to L-histidine. This is Histidinol dehydrogenase from Staphylococcus saprophyticus subsp. saprophyticus (strain ATCC 15305 / DSM 20229 / NCIMB 8711 / NCTC 7292 / S-41).